A 372-amino-acid chain; its full sequence is Queuine tRNA-ribosyltransferase (372 aa).

The Proton acceptor role is filled by Asp92. Residues 92–96, Asp146, Gln188, and Gly215 each bind substrate; that span reads DSGGY. The RNA binding stretch occupies residues 246–252; the sequence is GIGSLKE. The active-site Nucleophile is the Asp265. Positions 270–274 are RNA binding; important for wobble base 34 recognition; that stretch reads TRLGR. Cys303, Cys305, Cys308, and His334 together coordinate Zn(2+).

It belongs to the queuine tRNA-ribosyltransferase family. Homodimer. Within each dimer, one monomer is responsible for RNA recognition and catalysis, while the other monomer binds to the replacement base PreQ1. Zn(2+) is required as a cofactor.

It carries out the reaction 7-aminomethyl-7-carbaguanine + guanosine(34) in tRNA = 7-aminomethyl-7-carbaguanosine(34) in tRNA + guanine. Its pathway is tRNA modification; tRNA-queuosine biosynthesis. Catalyzes the base-exchange of a guanine (G) residue with the queuine precursor 7-aminomethyl-7-deazaguanine (PreQ1) at position 34 (anticodon wobble position) in tRNAs with GU(N) anticodons (tRNA-Asp, -Asn, -His and -Tyr). Catalysis occurs through a double-displacement mechanism. The nucleophile active site attacks the C1' of nucleotide 34 to detach the guanine base from the RNA, forming a covalent enzyme-RNA intermediate. The proton acceptor active site deprotonates the incoming PreQ1, allowing a nucleophilic attack on the C1' of the ribose to form the product. After dissociation, two additional enzymatic reactions on the tRNA convert PreQ1 to queuine (Q), resulting in the hypermodified nucleoside queuosine (7-(((4,5-cis-dihydroxy-2-cyclopenten-1-yl)amino)methyl)-7-deazaguanosine). The chain is Queuine tRNA-ribosyltransferase from Prochlorococcus marinus (strain AS9601).